A 388-amino-acid chain; its full sequence is MRYLTAGESHGPQLTAILEGVPAGLELRAEHINKELARRQKGYGRGRRMQIEKDEVKITGGVRHGKTLGSPIALVVENRDFKHWQTIMAVEPIDDEAEVKRKVTRPRPGHADLNGALKYGHRDMRNVLERSSARETTVRVAAGAVAKRILEEVGIRVAGHVIEIGGVRAKKLDYRSLEELQAVTEESPVRCFDPEAGQKMMEAIDWAKKNGDSIGGIVEVIVEGVPAGVGSYVHYDRKLDAKIAAAIVSINAFKGVEFGIGFEAARRPGSEVHDEIIWSPEQGFSRRTNRAGGFEGGVTTGMPIVVRGVMKPIPTLYKPLQSVDIETKEPFAASIERSDSCAVPAASVVAEAVVAWEVAAAIVEQFGQDRMDLIKENVERARRYAKEF.

The NADP(+) site is built by Arg39 and Arg45. Residues 130–132, 251–252, Gly296, 311–315, and Arg337 contribute to the FMN site; these read RSS, NA, and KPIPT.

This sequence belongs to the chorismate synthase family. Homotetramer. FMNH2 is required as a cofactor.

It carries out the reaction 5-O-(1-carboxyvinyl)-3-phosphoshikimate = chorismate + phosphate. Its pathway is metabolic intermediate biosynthesis; chorismate biosynthesis; chorismate from D-erythrose 4-phosphate and phosphoenolpyruvate: step 7/7. Functionally, catalyzes the anti-1,4-elimination of the C-3 phosphate and the C-6 proR hydrogen from 5-enolpyruvylshikimate-3-phosphate (EPSP) to yield chorismate, which is the branch point compound that serves as the starting substrate for the three terminal pathways of aromatic amino acid biosynthesis. This reaction introduces a second double bond into the aromatic ring system. The polypeptide is Chorismate synthase (Geobacillus kaustophilus (strain HTA426)).